The primary structure comprises 273 residues: Orotidine 5'-phosphate decarboxylase (273 aa).

Catalysis depends on K97, which acts as the Proton donor.

Belongs to the OMP decarboxylase family. Type 2 subfamily.

It catalyses the reaction orotidine 5'-phosphate + H(+) = UMP + CO2. It participates in pyrimidine metabolism; UMP biosynthesis via de novo pathway; UMP from orotate: step 2/2. The protein is Orotidine 5'-phosphate decarboxylase of Cellvibrio japonicus (strain Ueda107) (Pseudomonas fluorescens subsp. cellulosa).